Here is a 227-residue protein sequence, read N- to C-terminus: Cytochrome c oxidase subunit 2 (227 aa).

Topologically, residues Met-1–Ser-14 are mitochondrial intermembrane. The chain crosses the membrane as a helical span at residues Pro-15–Met-45. Residues Leu-46–Gln-58 are Mitochondrial matrix-facing. A helical transmembrane segment spans residues Glu-59–Met-86. At Asp-87 to Ser-227 the chain is on the mitochondrial intermembrane side. 6 residues coordinate Cu cation: His-160, Cys-195, Glu-197, Cys-199, His-203, and Met-206. Glu-197 serves as a coordination point for Mg(2+).

The protein belongs to the cytochrome c oxidase subunit 2 family. In terms of assembly, component of the cytochrome c oxidase (complex IV, CIV), a multisubunit enzyme composed of 14 subunits. The complex is composed of a catalytic core of 3 subunits MT-CO1, MT-CO2 and MT-CO3, encoded in the mitochondrial DNA, and 11 supernumerary subunits COX4I, COX5A, COX5B, COX6A, COX6B, COX6C, COX7A, COX7B, COX7C, COX8 and NDUFA4, which are encoded in the nuclear genome. The complex exists as a monomer or a dimer and forms supercomplexes (SCs) in the inner mitochondrial membrane with NADH-ubiquinone oxidoreductase (complex I, CI) and ubiquinol-cytochrome c oxidoreductase (cytochrome b-c1 complex, complex III, CIII), resulting in different assemblies (supercomplex SCI(1)III(2)IV(1) and megacomplex MCI(2)III(2)IV(2)). Found in a complex with TMEM177, COA6, COX18, COX20, SCO1 and SCO2. Interacts with TMEM177 in a COX20-dependent manner. Interacts with COX20. Interacts with COX16. It depends on Cu cation as a cofactor.

It is found in the mitochondrion inner membrane. It catalyses the reaction 4 Fe(II)-[cytochrome c] + O2 + 8 H(+)(in) = 4 Fe(III)-[cytochrome c] + 2 H2O + 4 H(+)(out). Component of the cytochrome c oxidase, the last enzyme in the mitochondrial electron transport chain which drives oxidative phosphorylation. The respiratory chain contains 3 multisubunit complexes succinate dehydrogenase (complex II, CII), ubiquinol-cytochrome c oxidoreductase (cytochrome b-c1 complex, complex III, CIII) and cytochrome c oxidase (complex IV, CIV), that cooperate to transfer electrons derived from NADH and succinate to molecular oxygen, creating an electrochemical gradient over the inner membrane that drives transmembrane transport and the ATP synthase. Cytochrome c oxidase is the component of the respiratory chain that catalyzes the reduction of oxygen to water. Electrons originating from reduced cytochrome c in the intermembrane space (IMS) are transferred via the dinuclear copper A center (CU(A)) of subunit 2 and heme A of subunit 1 to the active site in subunit 1, a binuclear center (BNC) formed by heme A3 and copper B (CU(B)). The BNC reduces molecular oxygen to 2 water molecules using 4 electrons from cytochrome c in the IMS and 4 protons from the mitochondrial matrix. The chain is Cytochrome c oxidase subunit 2 (MT-CO2) from Gallus gallus (Chicken).